A 145-amino-acid polypeptide reads, in one-letter code: MRTTFMAKANEVERKWYVVDAEGQTLGRLASEVASILRGKHKPTFTPHVDTGDHVIIINAEKVHLTGNKLNDKIYYRHTQHPGGLKQRTALEMRTNYPVQMLELAIKGMLPKGRLGRQMSKKLNVYAGAEHPHQAQKPEVYELRG.

This sequence belongs to the universal ribosomal protein uL13 family. Part of the 50S ribosomal subunit.

Its function is as follows. This protein is one of the early assembly proteins of the 50S ribosomal subunit, although it is not seen to bind rRNA by itself. It is important during the early stages of 50S assembly. This chain is Large ribosomal subunit protein uL13, found in Bacillus cytotoxicus (strain DSM 22905 / CIP 110041 / 391-98 / NVH 391-98).